We begin with the raw amino-acid sequence, 402 residues long: Leucine aminopeptidase 1 (402 aa).

The signal sequence occupies residues 1–18 (MKISNASLLALLLPAASA). A propeptide spanning residues 19 to 92 (RFVEQAEQNR…GTFNKRPYKK (74 aa)) is cleaved from the precursor. 2 N-linked (GlcNAc...) asparagine glycosylation sites follow: Asn111 and Asn184. Zn(2+) is bound by residues His192, Asp211, Glu250, and Asp277. N-linked (GlcNAc...) asparagine glycosylation is present at Asn304. An intrachain disulfide couples Cys326 to Cys330. His359 contacts Zn(2+).

Belongs to the peptidase M28 family. M28E subfamily. As to quaternary structure, monomer. Zn(2+) is required as a cofactor.

The protein localises to the secreted. Its function is as follows. Extracellular aminopeptidase that allows assimilation of proteinaceous substrates. The protein is Leucine aminopeptidase 1 (lap1) of Neurospora crassa (strain ATCC 24698 / 74-OR23-1A / CBS 708.71 / DSM 1257 / FGSC 987).